We begin with the raw amino-acid sequence, 215 residues long: uncharacterized protein (215 aa).

This sequence belongs to the thiaminase-2 family.

This is an uncharacterized protein from Haemophilus influenzae (strain ATCC 51907 / DSM 11121 / KW20 / Rd).